A 20-amino-acid polypeptide reads, in one-letter code: Alpha-conotoxin-like ts14a (20 aa).

Cystine bridges form between Cys3/Cys16 and Cys14/Cys20.

In terms of tissue distribution, expressed by the venom duct.

Its subcellular location is the secreted. In terms of biological role, alpha-conotoxins act on postsynaptic membranes, they bind to the nicotinic acetylcholine receptors (nAChR) and thus inhibit them. This chain is Alpha-conotoxin-like ts14a, found in Conus tessulatus (Tessellate cone).